The chain runs to 96 residues: Ferredoxin-1 (96 aa).

A 2Fe-2S ferredoxin-type domain is found at 1 to 95 (MKVIINGKEF…DCDEIVIESE (95 aa)). Residues C34, C39, C42, and C78 each contribute to the [2Fe-2S] cluster site. A disulfide bridge connects residues C52 and C87.

Belongs to the 2Fe2S plant-type ferredoxin family. [2Fe-2S] cluster serves as cofactor.

In terms of biological role, ferredoxins are iron-sulfur proteins that transfer electrons in a wide variety of metabolic reactions. The polypeptide is Ferredoxin-1 (fdx1) (Aquifex aeolicus (strain VF5)).